A 93-amino-acid chain; its full sequence is Putative septation protein SpoVG (93 aa).

It belongs to the SpoVG family.

In terms of biological role, could be involved in septation. The polypeptide is Putative septation protein SpoVG (Treponema denticola (strain ATCC 35405 / DSM 14222 / CIP 103919 / JCM 8153 / KCTC 15104)).